The primary structure comprises 760 residues: Penicillin-binding protein 1B (760 aa).

Over 1–8 the chain is Cytoplasmic; that stretch reads MFFNFKKY. Residues 9–29 traverse the membrane as a helical; Signal-anchor for type II membrane protein segment; that stretch reads FLIKVFFFVLILTLCYGLYLY. Residues 30–760 lie on the Extracellular side of the membrane; that stretch reads VKINRFINGK…NFLFWLKNLF (731 aa). The interval 136-308 is transglycosylase; the sequence is FRLEPKLIAM…SLYSPWTNPN (173 aa). Glu174 functions as the Proton donor; for transglycosylase activity in the catalytic mechanism. Residues 392–684 are transpeptidase; sequence EQAVKIEIPI…SSGAMQIYKR (293 aa). Ser451 functions as the Acyl-ester intermediate; for transpeptidase activity in the catalytic mechanism.

The protein in the N-terminal section; belongs to the glycosyltransferase 51 family. This sequence in the C-terminal section; belongs to the transpeptidase family.

It localises to the cell membrane. The catalysed reaction is [GlcNAc-(1-&gt;4)-Mur2Ac(oyl-L-Ala-gamma-D-Glu-L-Lys-D-Ala-D-Ala)](n)-di-trans,octa-cis-undecaprenyl diphosphate + beta-D-GlcNAc-(1-&gt;4)-Mur2Ac(oyl-L-Ala-gamma-D-Glu-L-Lys-D-Ala-D-Ala)-di-trans,octa-cis-undecaprenyl diphosphate = [GlcNAc-(1-&gt;4)-Mur2Ac(oyl-L-Ala-gamma-D-Glu-L-Lys-D-Ala-D-Ala)](n+1)-di-trans,octa-cis-undecaprenyl diphosphate + di-trans,octa-cis-undecaprenyl diphosphate + H(+). It catalyses the reaction Preferential cleavage: (Ac)2-L-Lys-D-Ala-|-D-Ala. Also transpeptidation of peptidyl-alanyl moieties that are N-acyl substituents of D-alanine.. It functions in the pathway cell wall biogenesis; peptidoglycan biosynthesis. Its function is as follows. Cell wall formation. Synthesis of cross-linked peptidoglycan from the lipid intermediates. The enzyme has a penicillin-insensitive transglycosylase N-terminal domain (formation of linear glycan strands) and a penicillin-sensitive transpeptidase C-terminal domain (cross-linking of the peptide subunits). The sequence is that of Penicillin-binding protein 1B (mrcB) from Buchnera aphidicola subsp. Acyrthosiphon pisum (strain APS) (Acyrthosiphon pisum symbiotic bacterium).